We begin with the raw amino-acid sequence, 637 residues long: Neuroendocrine convertase 2 (637 aa).

A signal peptide spans 1 to 24 (MEGGCGSQWKAAGLLFCVMVFASA). A propeptide spanning residues 25–108 (ERPVFTNHFL…QQEGFDRKKR (84 aa)) is cleaved from the precursor. Positions 128-452 (QWYLFNTGQA…YGVLDAGAMV (325 aa)) constitute a Peptidase S8 domain. Active-site charge relay system residues include Asp166 and His207. 2 disulfide bridges follow: Cys224–Cys375 and Cys316–Cys346. A glycan (N-linked (GlcNAc...) asparagine) is linked at Asn374. Catalysis depends on Ser383, which acts as the Charge relay system. The region spanning 460-596 (TVPERFHCVG…TLMLHGTQSA (137 aa)) is the P/Homo B domain. Cys467 and Cys493 are joined by a disulfide. N-linked (GlcNAc...) asparagine glycans are attached at residues Asn513 and Asn523.

It belongs to the peptidase S8 family. Furin subfamily.

Its subcellular location is the cytoplasmic vesicle. The protein resides in the secretory vesicle. It localises to the secreted. The enzyme catalyses Release of protein hormones and neuropeptides from their precursors, generally by hydrolysis of -Lys-Arg-|- bonds.. Serine endopeptidase which is involved in the processing of hormone and other protein precursors at sites comprised of pairs of basic amino acid residues. Responsible for the release of glucagon from proglucagon in pancreatic A cells. The polypeptide is Neuroendocrine convertase 2 (Pcsk2) (Rattus norvegicus (Rat)).